Consider the following 217-residue polypeptide: Flagellar L-ring protein 1 (217 aa).

Residues 1–16 (MTLARLAPLAALLLAA) form the signal peptide. Cys17 carries N-palmitoyl cysteine lipidation. Residue Cys17 is the site of S-diacylglycerol cysteine attachment.

This sequence belongs to the FlgH family. The basal body constitutes a major portion of the flagellar organelle and consists of four rings (L,P,S, and M) mounted on a central rod.

It localises to the cell outer membrane. The protein resides in the bacterial flagellum basal body. Functionally, assembles around the rod to form the L-ring and probably protects the motor/basal body from shearing forces during rotation. The chain is Flagellar L-ring protein 1 from Chromobacterium violaceum (strain ATCC 12472 / DSM 30191 / JCM 1249 / CCUG 213 / NBRC 12614 / NCIMB 9131 / NCTC 9757 / MK).